We begin with the raw amino-acid sequence, 568 residues long: Protein yellow (568 aa).

Residues 1 to 28 (MHAQDKGGILPALSLLLIAVAMVSPSQA) form the signal peptide. 2 N-linked (GlcNAc...) asparagine glycosylation sites follow: N151 and N222.

Belongs to the major royal jelly protein family.

It localises to the secreted. Its function is as follows. Controls the pigmentation pattern of the adult cuticle and larval mouth parts. This is Protein yellow (y) from Drosophila madeirensis (Fruit fly).